The sequence spans 397 residues: MDDSKRILITKVLKNEVTEALGCTEVGLIGYAISLCNISYPFSIEKIEVTLNNGSFKNAYAVGVPNTKKYGILPAVVGGLLGNSKNKLLIFNDIKYDQKLEDFIKKRLEVKVLDGPLYCGVKIKDTSGKFFESLIKDNHLNVVIPKIEKEKISLEITDFEKEEYKSLELTDFLNYLDEIPEEIINLVEKTIYTNKNLIKGDFLNYGNDILSNMVNKTTSACNTRMTGENMPAMSVAKSGNMGLMATLPIISYDNLTENNFEKLKKSLLLAMLVTIYSTYNSSYLSSMCGCVSKGGMGAVIGLCYYKNGKNLKKLNSAARAFTANLPGIICDGGKVGCALKLASGCFAAYSSLYVEISHENGIVGKNFKECVQNISKISKAMGDLDCDIVKIMSKKEM.

Cys23 (proton acceptor) is an active-site residue. Cys288, Cys330, and Cys337 together coordinate [4Fe-4S] cluster.

The protein belongs to the L-cysteine desulfidase family. Homotrimer. The cofactor is [4Fe-4S] cluster.

It catalyses the reaction L-cysteine + H2O = hydrogen sulfide + pyruvate + NH4(+) + H(+). Catalyzes the cleavage of L-cysteine to form 2-aminoprop-2-enoate and sulfide. The former then spontaneously hydrolyzes to pyruvate and NH(3). May be responsible for the production of sulfide required for the biosynthesis of iron-sulfur centers in this archaea. The polypeptide is L-cysteine desulfidase (Methanococcus maripaludis (strain C7 / ATCC BAA-1331)).